Reading from the N-terminus, the 273-residue chain is Dermonecrotic toxin LapSicTox-alphaIB1aii (273 aa).

The active site involves His-5. Mg(2+)-binding residues include Glu-25 and Asp-27. His-41 serves as the catalytic Nucleophile. 2 disulfides stabilise this stretch: Cys-45-Cys-51 and Cys-47-Cys-190. Asp-85 is a Mg(2+) binding site. An N-linked (GlcNAc...) asparagine glycan is attached at Asn-250.

It belongs to the arthropod phospholipase D family. Class II subfamily. Mg(2+) serves as cofactor. Expressed by the venom gland.

The protein localises to the secreted. It catalyses the reaction an N-(acyl)-sphingosylphosphocholine = an N-(acyl)-sphingosyl-1,3-cyclic phosphate + choline. The enzyme catalyses an N-(acyl)-sphingosylphosphoethanolamine = an N-(acyl)-sphingosyl-1,3-cyclic phosphate + ethanolamine. The catalysed reaction is a 1-acyl-sn-glycero-3-phosphocholine = a 1-acyl-sn-glycero-2,3-cyclic phosphate + choline. It carries out the reaction a 1-acyl-sn-glycero-3-phosphoethanolamine = a 1-acyl-sn-glycero-2,3-cyclic phosphate + ethanolamine. In terms of biological role, dermonecrotic toxins cleave the phosphodiester linkage between the phosphate and headgroup of certain phospholipids (sphingolipid and lysolipid substrates), forming an alcohol (often choline) and a cyclic phosphate. This toxin acts on sphingomyelin (SM). It may also act on ceramide phosphoethanolamine (CPE), lysophosphatidylcholine (LPC) and lysophosphatidylethanolamine (LPE), but not on lysophosphatidylserine (LPS), and lysophosphatidylglycerol (LPG). It acts by transphosphatidylation, releasing exclusively cyclic phosphate products as second products. Induces dermonecrosis, hemolysis, increased vascular permeability, edema, inflammatory response, and platelet aggregation. This chain is Dermonecrotic toxin LapSicTox-alphaIB1aii, found in Loxosceles apachea (Apache recluse spider).